Here is a 306-residue protein sequence, read N- to C-terminus: Mitochondrial 2-oxoglutarate/malate carrier protein (306 aa).

Solcar repeat units follow at residues 7–95, 103–194, and 203–292; these read VPNV…LLER, LSFG…AKQA, and DGIF…MNAA. Transmembrane regions (helical) follow at residues 9–38, 72–93, 108–122, 172–192, 205–226, and 268–286; these read NVVK…NRMQ, SAGL…AFLL, KAVL…GSFV, PTVL…SQAK, IFCH…SMPV, and FTPY…FIIL.

It belongs to the mitochondrial carrier (TC 2.A.29) family. Interacts with ant-1.1 and ced-9. In terms of tissue distribution, ubiquitously expressed, but highly expressed in the anterior pharynx.

The protein localises to the mitochondrion. It localises to the mitochondrion inner membrane. The enzyme catalyses (S)-malate(in) + 2-oxoglutarate(out) = (S)-malate(out) + 2-oxoglutarate(in). It catalyses the reaction malonate(in) + 2-oxoglutarate(out) = malonate(out) + 2-oxoglutarate(in). The catalysed reaction is succinate(in) + 2-oxoglutarate(out) = succinate(out) + 2-oxoglutarate(in). It carries out the reaction maleate(in) + 2-oxoglutarate(out) = maleate(out) + 2-oxoglutarate(in). The enzyme catalyses oxaloacetate(in) + 2-oxoglutarate(out) = oxaloacetate(out) + 2-oxoglutarate(in). Its function is as follows. Catalyzes the transport of 2-oxoglutarate (alpha-oxoglutarate) across the inner mitochondrial membrane in an electroneutral exchange for malate. Can also exchange 2-oxoglutarate for other dicarboxylic acids such as malonate, succinate, maleate and oxaloacetate, although with lower affinity. Contributes to several metabolic processes, including the malate-aspartate shuttle, the oxoglutarate/isocitrate shuttle, in gluconeogenesis from lactate, and in nitrogen metabolism. Maintains mitochondrial fusion and fission events, and the organization and morphology of cristae. Regulator of apoptosis, insulin secretion and germline proliferation. Furthermore, plays a role in the oxidative stress response regulating endogenous levels of reactive oxygen species (ROS). Involved in the regulation of lin-35/Rb-mediated apoptosis in the germline. This Caenorhabditis elegans protein is Mitochondrial 2-oxoglutarate/malate carrier protein.